We begin with the raw amino-acid sequence, 860 residues long: Leucine--tRNA ligase (860 aa).

Residues 42–52 (PYPSGRLHMGH) carry the 'HIGH' region motif. Residues 619–623 (KMSKS) carry the 'KMSKS' region motif. Lys-622 is a binding site for ATP.

This sequence belongs to the class-I aminoacyl-tRNA synthetase family.

It is found in the cytoplasm. It carries out the reaction tRNA(Leu) + L-leucine + ATP = L-leucyl-tRNA(Leu) + AMP + diphosphate. This Pasteurella multocida (strain Pm70) protein is Leucine--tRNA ligase.